Here is a 446-residue protein sequence, read N- to C-terminus: Chromosomal replication initiator protein DnaA (446 aa).

Residues 1–72 (MENILDLWNK…ADTIYELTGE (72 aa)) form a domain I, interacts with DnaA modulators region. A domain II region spans residues 72–109 (EELSIKFIIPQNQDEVEAMPKSPIKKMSKEDPVDIPQN). A domain III, AAA+ region region spans residues 110–326 (MLNPKYTFDT…GALIRVVAYS (217 aa)). Positions 154, 156, 157, and 158 each coordinate ATP. Residues 327 to 446 (SLINKDINAD…HVKEIKEQLK (120 aa)) form a domain IV, binds dsDNA region.

It belongs to the DnaA family. As to quaternary structure, oligomerizes as a right-handed, spiral filament on DNA at oriC.

The protein resides in the cytoplasm. Functionally, plays an essential role in the initiation and regulation of chromosomal replication. ATP-DnaA binds to the origin of replication (oriC) to initiate formation of the DNA replication initiation complex once per cell cycle. Binds the DnaA box (a 9 base pair repeat at the origin) and separates the double-stranded (ds)DNA. Forms a right-handed helical filament on oriC DNA; dsDNA binds to the exterior of the filament while single-stranded (ss)DNA is stabiized in the filament's interior. The ATP-DnaA-oriC complex binds and stabilizes one strand of the AT-rich DNA unwinding element (DUE), permitting loading of DNA polymerase. After initiation quickly degrades to an ADP-DnaA complex that is not apt for DNA replication. Binds acidic phospholipids. This Bacillus pumilus (strain SAFR-032) protein is Chromosomal replication initiator protein DnaA.